The sequence spans 390 residues: Carbamoyl phosphate synthase small chain (390 aa).

The segment at 1–198 (MTSTPTPTPT…LGEGYAVGPE (198 aa)) is CPSase. Serine 53, glycine 250, and glycine 252 together coordinate L-glutamine. The Glutamine amidotransferase type-1 domain maps to 202–390 (RVVVLDYGVK…VGELKGRVEA (189 aa)). Cysteine 279 serves as the catalytic Nucleophile. Residues leucine 280, glutamine 283, asparagine 321, glycine 323, and phenylalanine 324 each coordinate L-glutamine. Catalysis depends on residues histidine 363 and glutamate 365.

It belongs to the CarA family. In terms of assembly, composed of two chains; the small (or glutamine) chain promotes the hydrolysis of glutamine to ammonia, which is used by the large (or ammonia) chain to synthesize carbamoyl phosphate. Tetramer of heterodimers (alpha,beta)4.

The enzyme catalyses hydrogencarbonate + L-glutamine + 2 ATP + H2O = carbamoyl phosphate + L-glutamate + 2 ADP + phosphate + 2 H(+). It catalyses the reaction L-glutamine + H2O = L-glutamate + NH4(+). Its pathway is amino-acid biosynthesis; L-arginine biosynthesis; carbamoyl phosphate from bicarbonate: step 1/1. The protein operates within pyrimidine metabolism; UMP biosynthesis via de novo pathway; (S)-dihydroorotate from bicarbonate: step 1/3. Small subunit of the glutamine-dependent carbamoyl phosphate synthetase (CPSase). CPSase catalyzes the formation of carbamoyl phosphate from the ammonia moiety of glutamine, carbonate, and phosphate donated by ATP, constituting the first step of 2 biosynthetic pathways, one leading to arginine and/or urea and the other to pyrimidine nucleotides. The small subunit (glutamine amidotransferase) binds and cleaves glutamine to supply the large subunit with the substrate ammonia. In Maricaulis maris (strain MCS10) (Caulobacter maris), this protein is Carbamoyl phosphate synthase small chain.